A 231-amino-acid polypeptide reads, in one-letter code: Flagellar L-ring protein (231 aa).

An N-terminal signal peptide occupies residues 1–18 (MNRLMIVSLLGIATALGG). Cys19 carries N-palmitoyl cysteine lipidation. A lipid anchor (S-diacylglycerol cysteine) is attached at Cys19. A disordered region spans residues 118–141 (LSLSAEYGGSRDAKGDSQAGQSNS).

It belongs to the FlgH family. In terms of assembly, the basal body constitutes a major portion of the flagellar organelle and consists of four rings (L,P,S, and M) mounted on a central rod.

The protein resides in the cell outer membrane. It is found in the bacterial flagellum basal body. Assembles around the rod to form the L-ring and probably protects the motor/basal body from shearing forces during rotation. In Pseudomonas aeruginosa (strain UCBPP-PA14), this protein is Flagellar L-ring protein.